Here is a 648-residue protein sequence, read N- to C-terminus: Translation factor GUF1 homolog, mitochondrial (648 aa).

The tr-type G domain maps to 55-247 (ERVRNFSIIA…AVIERIPSPP (193 aa)). GTP-binding positions include 64–71 (AHVDHGKS), 140–144 (DTPGH), and 194–197 (NKID).

The protein belongs to the TRAFAC class translation factor GTPase superfamily. Classic translation factor GTPase family. LepA subfamily.

It localises to the mitochondrion inner membrane. It catalyses the reaction GTP + H2O = GDP + phosphate + H(+). Promotes mitochondrial protein synthesis. May act as a fidelity factor of the translation reaction, by catalyzing a one-codon backward translocation of tRNAs on improperly translocated ribosomes. Binds to mitochondrial ribosomes in a GTP-dependent manner. This Oryza sativa subsp. indica (Rice) protein is Translation factor GUF1 homolog, mitochondrial.